Reading from the N-terminus, the 235-residue chain is Orotidine 5'-phosphate decarboxylase (235 aa).

Residues Asp-12, Lys-34, 61 to 70, Thr-116, Arg-177, Gln-186, and Arg-207 contribute to the substrate site; that span reads DMKLLDIDNT. Lys-63 serves as the catalytic Proton donor.

Belongs to the OMP decarboxylase family. Type 1 subfamily. In terms of assembly, homodimer.

It carries out the reaction orotidine 5'-phosphate + H(+) = UMP + CO2. It functions in the pathway pyrimidine metabolism; UMP biosynthesis via de novo pathway; UMP from orotate: step 2/2. Functionally, catalyzes the decarboxylation of orotidine 5'-monophosphate (OMP) to uridine 5'-monophosphate (UMP). The polypeptide is Orotidine 5'-phosphate decarboxylase (Agrobacterium fabrum (strain C58 / ATCC 33970) (Agrobacterium tumefaciens (strain C58))).